The sequence spans 228 residues: Glucose-induced degradation protein 8 homolog (228 aa).

Residues 29 to 61 (SKSDLNKLVMNYLVIEGYQEAAAKFQEESSTQT) form the LisH domain. The 58-residue stretch at 67-124 (SIADRMAIRSAIQCGDVEKGIEIVNDLNPEILDTNPQLYFHLQQQKLIELIRKGMTAE) folds into the CTLH domain.

Belongs to the GID8 family.

The protein localises to the cytoplasm. The protein resides in the nucleus. Functionally, core component of the CTLH E3 ubiquitin-protein ligase complex that mediates ubiquitination and subsequent proteasomal degradation of target proteins. Acts as a positive regulator of Wnt signaling pathway by promoting beta-catenin (CTNNB1) nuclear accumulation. This is Glucose-induced degradation protein 8 homolog from Dictyostelium discoideum (Social amoeba).